We begin with the raw amino-acid sequence, 870 residues long: MISNSINVTPNKESKMYVVKRDGTKENVSFDKITSRISFLCEMEPKLNSDIVDPIEVAQKVVSGVFPGVKTTELDNLAAETAAYMSTRHPDYGILAARISVSNLHKQTSKSFVETVKKQYEFINPKSNLLAPLVSKELYEIVMKHGERLESVIDYYRDFDYDFFGFKTLERSYLHRINGKIVERPQHMLMRVSIGIHGEDLESAINTYKRLSEKLFTHATPTLFNAGTPSPQMSSCFLVQMKEDSIDGIYDTLKQCALISKSAGGIGIAVHKIRAAQSYIRGTNGTSNGLVPMLRVFNDTARYVDQGGGKRKGAFAVYLEPWHADVFEFIDLKKNTGKEEMRARDLFYALWVSDIFMERVEQNGDWALFCPNEAPGLAETHSEEHRALYLKYEATPDLPRRVIKAQELWFAIMESQVETGTPFILYKDACNAKSNQKNLGTISSSNLCTEIIQYTSPDEIAVCNLASIALPKFVRQKVGSTDPKEKEFDHQFLFEITKLITVNLNVIIDRNYYPVAEAKTSNLRHRPIGIGIQGLADVFIKMRMPFDSVAAAKLNVEIAETIYFAALTASHELAIRDGTYESFKGSPASKGILQFDMWNVTPSSRWNWAELKDNIVNKGGLRNSLLIAPMPTASTSQILGNNECFEPYTSNIYSRRVLAGEFTIVNKQLLEDLMELGIWSPEMKNQIVAARGSIQSIGGIPDDLKELYKTVWEIRQRTLIDMAADRGAFIDQSQSFNVFIAEPTFAKLTSMHFYSWKKGLKTGMYYLRTRPAADAIQFTVDPIVSQTPKPVENNINSTTPLKTPTKTPNSSNRISTSPTNNLTSPIRFNITQQQQQQQQQQQQQNNNEDDLANYDGMTCRREEGCLVCGS.

The ATP-cone domain maps to 16–110 (MYVVKRDGTK…VSNLHKQTSK (95 aa)). ATP contacts are provided by residues 20 to 21 (KR), 26 to 32 (ENVSFDK), Thr71, and Asp75. Position 235 (Ser235) interacts with GDP. Cys236 and Cys463 are disulfide-bonded. Residues 244–246 (DSI), Lys261, Arg274, and 281–282 (RG) contribute to the dTTP site. Residue Asn446 participates in GDP binding. The active-site Proton acceptor is the Asn446. The Cysteine radical intermediate role is filled by Cys448. GDP-binding positions include Glu450 and 632–635 (TAST). Glu450 acts as the Proton acceptor in catalysis. The disordered stretch occupies residues 789–854 (KPVENNINST…NNNEDDLANY (66 aa)). The segment covering 796 to 811 (NSTTPLKTPTKTPNSS) has biased composition (low complexity). Polar residues predominate over residues 812–831 (NRISTSPTNNLTSPIRFNIT). Positions 832–844 (QQQQQQQQQQQQQ) are enriched in low complexity.

This sequence belongs to the ribonucleoside diphosphate reductase large chain family. Heterodimer of a large and a small subunit.

The protein resides in the cytoplasm. The catalysed reaction is a 2'-deoxyribonucleoside 5'-diphosphate + [thioredoxin]-disulfide + H2O = a ribonucleoside 5'-diphosphate + [thioredoxin]-dithiol. With respect to regulation, under complex allosteric control mediated by deoxynucleoside triphosphates and ATP binding to separate specificity and activation sites on the large subunit. The type of nucleotide bound at the specificity site determines substrate preference. It seems probable that ATP makes the enzyme reduce CDP and UDP, dGTP favors ADP reduction and dTTP favors GDP reduction. Stimulated by ATP and inhibited by dATP binding to the activity site. In terms of biological role, provides the precursors necessary for DNA synthesis. Catalyzes the biosynthesis of deoxyribonucleotides from the corresponding ribonucleotides. The chain is Ribonucleoside-diphosphate reductase large subunit (rnrA) from Dictyostelium discoideum (Social amoeba).